Here is a 1115-residue protein sequence, read N- to C-terminus: Tbc2 translation factor, chloroplastic (1115 aa).

Composition is skewed to low complexity over residues 69-87 (TASVPSTSGASPSGSQLSS) and 163-175 (RRAGSGASTSGRA). 2 disordered regions span residues 69–90 (TASVPSTSGASPSGSQLSSKAL) and 163–210 (RRAG…SSSS). The span at 176–186 (RGWGSGPGRNG) shows a compositional bias: gly residues. The span at 187–210 (SGSSSVSVNGSGSSSNGSSSSSSS) shows a compositional bias: low complexity. 9 consecutive repeat copies span residues 483 to 521 (LVLELSRARLTSFSPLQLAKAVQGLAALRYRPSPEWVEA), 607 to 645 (LDLTSRLLAAGGFSGGELQQLLEGLTRLALQPPLEWMQA), 685 to 723 (LAATQANMKQLLADTTCSAALLTALRRLNIEPPPGWVGA), 724 to 763 (LLEESRSALKNRCTDLHLANLAGSLAAWGVRPDGRWAARL), 764 to 803 (MWRSQVLMNEDRMSPRALVALLQAMVSLGLSPNPVWTQLC), 804 to 842 (LQAAVRRASQPAFEPHHYGTLMASLHALGIQPPQEWLTR), 843 to 880 (MLLSTYRCWDRFSVTHWSSLLPALVLLKARPPREWLRR), 990 to 1029 (PAAHAATSTTTATAVAHPQPQLLPQAQALPQPGPEWQAAW), and 1030 to 1068 (WAASTRLLLRVRYAPSELVLTAGWLGSLGLRPPPEWLQA). The 9 X 38 AA approximate repeats stretch occupies residues 483-1068 (LVLELSRARL…LRPPPEWLQA (586 aa)).

As to quaternary structure, part of a 400 kDa complex which is not stably associated with RNA.

Its subcellular location is the plastid. The protein localises to the chloroplast stroma. In terms of biological role, required for expression of the chloroplast encoded psbC mRNA, most likely for translation initiation. Interacts with the 5'-UTR of psbC. The protein is Tbc2 translation factor, chloroplastic (TBC2) of Chlamydomonas reinhardtii (Chlamydomonas smithii).